The sequence spans 29 residues: Phospholemman-like protein (29 aa).

It belongs to the FXYD family. Phosphorylated by protein kinase C.

It localises to the membrane. In terms of biological role, induces a hyperpolarization-activated chloride current when expressed in Xenopus oocytes. This is Phospholemman-like protein from Scyliorhinus canicula (Small-spotted catshark).